A 782-amino-acid polypeptide reads, in one-letter code: LPS-assembly protein LptD (782 aa).

Residues 1–24 form the signal peptide; that stretch reads MKKNSYTRLSIAILSTLYSVSSLA.

This sequence belongs to the LptD family. In terms of assembly, component of the lipopolysaccharide transport and assembly complex. Interacts with LptE and LptA.

The protein resides in the cell outer membrane. Its function is as follows. Together with LptE, is involved in the assembly of lipopolysaccharide (LPS) at the surface of the outer membrane. This is LPS-assembly protein LptD from Pasteurella multocida (strain Pm70).